The sequence spans 478 residues: Divinyl ether synthase CYP74D2 (478 aa).

Residue C431 coordinates heme.

Belongs to the cytochrome P450 family. 9-divinyl ether synthase subfamily. In terms of tissue distribution, expressed in roots.

It catalyses the reaction (9S)-hydroperoxy-(10E,12Z)-octadecadienoate = colneleate + H2O. The catalysed reaction is (9S)-hydroperoxy-(10E,12Z,15Z)-octadecatrienoate = colnelenate + H2O. Functionally, involved in the biosynthesis of the anti-fungal and antibacterial toxins colneleate and colnelenate. Can use (9S)-hydroperoxy-(10E,12Z)-octadecadienoate (9-HPOD) and (9S)-hydroperoxy-(10E,12Z,15Z)-octadecatrienoate (9-HPOT) as substrates but has no activity with the corresponding 13-hydroperoxides (13-HPOD and 13-HPOT). The chain is Divinyl ether synthase CYP74D2 from Solanum tuberosum (Potato).